Reading from the N-terminus, the 76-residue chain is Dermaseptin-H1 (76 aa).

Residues 1–22 form the signal peptide; sequence MDILKKSLFIVLFLGLVSLSIC. The propeptide occupies 23–45; it reads EEEKRENEDEEEQEDDEQSEEKR. Positions 25 to 44 are disordered; it reads EKRENEDEEEQEDDEQSEEK. The span at 30-41 shows a compositional bias: acidic residues; that stretch reads EDEEEQEDDEQS. The residue at position 73 (Gln-73) is a Glutamine amide. The propeptide occupies 75 to 76; the sequence is EQ.

In terms of tissue distribution, expressed by the skin glands.

It is found in the secreted. Its function is as follows. Has antimicrobial activity. The chain is Dermaseptin-H1 from Pithecopus hypochondrialis (Orange-legged leaf frog).